We begin with the raw amino-acid sequence, 458 residues long: UDP-N-acetylmuramoylalanine--D-glutamate ligase (458 aa).

124–130 (GSDGKTT) contributes to the ATP binding site.

This sequence belongs to the MurCDEF family.

The protein resides in the cytoplasm. It carries out the reaction UDP-N-acetyl-alpha-D-muramoyl-L-alanine + D-glutamate + ATP = UDP-N-acetyl-alpha-D-muramoyl-L-alanyl-D-glutamate + ADP + phosphate + H(+). The protein operates within cell wall biogenesis; peptidoglycan biosynthesis. Functionally, cell wall formation. Catalyzes the addition of glutamate to the nucleotide precursor UDP-N-acetylmuramoyl-L-alanine (UMA). The polypeptide is UDP-N-acetylmuramoylalanine--D-glutamate ligase (Clostridium botulinum (strain 657 / Type Ba4)).